The following is a 140-amino-acid chain: Hexon-interlacing protein (140 aa).

A coiled-coil region spans residues Leu-100–Gln-127. The residue at position 135 (Ser-135) is a Phosphoserine; by host.

Belongs to the adenoviridae hexon-interlacing protein family. Homotrimer. Interacts with hexon protein; this interaction tethers the hexons together. Self-interacts with adjacent proteins. Interacts with kinesin light chain KLC1; this interaction leads to capsid disruption at the nuclear pore complex during virus entry into host cell.

It is found in the virion. The protein localises to the host nucleus. In terms of biological role, structural component of the virion that forms triskelion structures consisting of three molecules that stabilize three hexon trimers at the center of each icosahedral facet and fixes the peripentonal hexons. Dispensable for assembly. During virus entry, recruits the anterograde motor kinesin-1 to the capsid docked at the nuclear pore complex thereby subjecting the docked capsid to a pulling force. The resulting tension leads to capsid disruption, dispersion of capsid fragments toward cell periphery and eventually viral DNA entry into the host nucleus. This is Hexon-interlacing protein from Human adenovirus C serotype 2 (HAdV-2).